A 218-amino-acid polypeptide reads, in one-letter code: Pyridoxine/pyridoxamine 5'-phosphate oxidase (218 aa).

Residues 14–17 (RREY) and Lys-72 contribute to the substrate site. FMN contacts are provided by residues 67–72 (RIVLLK), 82–83 (YT), Arg-88, Lys-89, and Gln-111. Substrate contacts are provided by Tyr-129, Arg-133, and Ser-137. FMN-binding positions include 146-147 (QS) and Trp-191. Residue 197–199 (RLH) participates in substrate binding. Arg-201 contacts FMN.

It belongs to the pyridoxamine 5'-phosphate oxidase family. In terms of assembly, homodimer. The cofactor is FMN.

It carries out the reaction pyridoxamine 5'-phosphate + O2 + H2O = pyridoxal 5'-phosphate + H2O2 + NH4(+). It catalyses the reaction pyridoxine 5'-phosphate + O2 = pyridoxal 5'-phosphate + H2O2. Its pathway is cofactor metabolism; pyridoxal 5'-phosphate salvage; pyridoxal 5'-phosphate from pyridoxamine 5'-phosphate: step 1/1. It participates in cofactor metabolism; pyridoxal 5'-phosphate salvage; pyridoxal 5'-phosphate from pyridoxine 5'-phosphate: step 1/1. Functionally, catalyzes the oxidation of either pyridoxine 5'-phosphate (PNP) or pyridoxamine 5'-phosphate (PMP) into pyridoxal 5'-phosphate (PLP). The protein is Pyridoxine/pyridoxamine 5'-phosphate oxidase of Escherichia fergusonii (strain ATCC 35469 / DSM 13698 / CCUG 18766 / IAM 14443 / JCM 21226 / LMG 7866 / NBRC 102419 / NCTC 12128 / CDC 0568-73).